The chain runs to 400 residues: Tyrosine--tRNA ligase 2 (400 aa).

Positions 46–55 (PSAPDIHLGH) match the 'HIGH' region motif. Positions 230-234 (KMSKS) match the 'KMSKS' region motif. Lys-233 is a binding site for ATP. One can recognise an S4 RNA-binding domain in the interval 339 to 399 (NNLIEAIVKI…GKKKIVKLLV (61 aa)).

Belongs to the class-I aminoacyl-tRNA synthetase family. TyrS type 2 subfamily. Homodimer.

The protein localises to the cytoplasm. It catalyses the reaction tRNA(Tyr) + L-tyrosine + ATP = L-tyrosyl-tRNA(Tyr) + AMP + diphosphate + H(+). Its function is as follows. Catalyzes the attachment of tyrosine to tRNA(Tyr) in a two-step reaction: tyrosine is first activated by ATP to form Tyr-AMP and then transferred to the acceptor end of tRNA(Tyr). The protein is Tyrosine--tRNA ligase 2 of Clostridium acetobutylicum (strain ATCC 824 / DSM 792 / JCM 1419 / IAM 19013 / LMG 5710 / NBRC 13948 / NRRL B-527 / VKM B-1787 / 2291 / W).